We begin with the raw amino-acid sequence, 549 residues long: OBERON-like protein (549 aa).

The tract at residues 1–56 (MLPPRQQPRPGGLQTSLSLVSPDACGSPNPQERGSTSDQARDSPSESASSRETWPT) is disordered. Composition is skewed to polar residues over residues 28–38 (PNPQERGSTSD) and 45–56 (SESASSRETWPT). A PHD-type zinc finger spans residues 224-288 (LCMCVICYKF…LFRCHACSRT (65 aa)). Positions 394–520 (VQEAIRKMEA…YLFEKIKLQE (127 aa)) form a coiled coil. A disordered region spans residues 519 to 549 (QESSRASQSSAGGNDPSQMMYSKIQDLIKNM). Residues 521–538 (SSRASQSSAGGNDPSQMM) are compositionally biased toward polar residues.

In terms of assembly, self-interacts and probably forms heteromers. Binds to VPg of pea seed borne mosaic virus (PSbMV), turnip mosaic virus (TuMV) and lettuce mosaic virus (LMV), but not with VPg of tobacco etch virus (TEV), cowpea mosaic virus (CPMV), tomato black ring virus (TBRV) and grapevine fan leaf virus (GFLV).

It is found in the nucleus. In terms of biological role, required for the maintenance and/or establishment of both the shoot and root meristems, probably by controlling the expression of the meristem genes and of genes required for auxin responses. Involved in the development of the basal pole and in auxin-mediated root and vascular development in the embryo. Confers sensitivity to turnip mosaic virus (TuMV) probably by promoting viral movement and multiplication via interaction with TuMV VPg. The sequence is that of OBERON-like protein (PVIP) from Nicotiana benthamiana.